Reading from the N-terminus, the 206-residue chain is Shieldin complex subunit 1 (206 aa).

Composition is skewed to polar residues over residues 1–15 (MATQETTPGSQTEES), 33–43 (RPSQQTNSEAF), and 60–69 (DSSNLNTEQN). 2 disordered regions span residues 1–21 (MATQETTPGSQTEESNALDLP) and 33–69 (RPSQQTNSEAFSSEEACSIPCSSDVDPDSSNLNTEQN).

In terms of assembly, component of the shieldin complex, consisting of SHLD1, SHLD2, SHLD3 and MAD2L2/REV7. Within the complex, SHLD2 forms a scaffold which interacts with a SHLD3-MAD2L2 subcomplex via its N-terminus, and with SHLD1 via its C-terminus. Interacts with ASTE1.

It localises to the chromosome. Component of the shieldin complex, which plays an important role in repair of DNA double-stranded breaks (DSBs). During G1 and S phase of the cell cycle, the complex functions downstream of TP53BP1 to promote non-homologous end joining (NHEJ) and suppress DNA end resection. Mediates various NHEJ-dependent processes including immunoglobulin class-switch recombination, and fusion of unprotected telomeres. This chain is Shieldin complex subunit 1, found in Bos taurus (Bovine).